The primary structure comprises 130 residues: Glycine cleavage system H protein (130 aa).

A Lipoyl-binding domain is found at 24 to 106 (GIKVGISAFA…YQEGWLLKIT (83 aa)). K65 carries the N6-lipoyllysine modification.

It belongs to the GcvH family. The glycine cleavage system is composed of four proteins: P, T, L and H. (R)-lipoate serves as cofactor.

The glycine cleavage system catalyzes the degradation of glycine. The H protein shuttles the methylamine group of glycine from the P protein to the T protein. The protein is Glycine cleavage system H protein of Synechococcus sp. (strain RCC307).